The chain runs to 77 residues: Acyl carrier protein (77 aa).

The Carrier domain occupies 1-76 (MAVFEDVRDV…DVVNYIEKLG (76 aa)). Ser36 carries the post-translational modification O-(pantetheine 4'-phosphoryl)serine.

The protein belongs to the acyl carrier protein (ACP) family. Post-translationally, 4'-phosphopantetheine is transferred from CoA to a specific serine of apo-ACP by AcpS. This modification is essential for activity because fatty acids are bound in thioester linkage to the sulfhydryl of the prosthetic group.

It localises to the cytoplasm. Its pathway is lipid metabolism; fatty acid biosynthesis. In terms of biological role, carrier of the growing fatty acid chain in fatty acid biosynthesis. This Campylobacter concisus (strain 13826) protein is Acyl carrier protein.